The primary structure comprises 785 residues: Ubiquitin carboxyl-terminal hydrolase 1 (785 aa).

2 disordered regions span residues 1 to 21 (MPGV…SKKN) and 33 to 52 (TKRA…ASEY). Positions 7–16 (SESNGLSRGS) are enriched in polar residues. 3 positions are modified to phosphoserine: S16, S42, and S67. The 705-residue stretch at 81–785 (VGLNNLGNTC…TPYLLFYKKL (705 aa)) folds into the USP domain. The active-site Nucleophile is C90. Basic and acidic residues-rich tracts occupy residues 258–275 (EDFK…KSDT) and 286–298 (LSKE…ENQR). The interval 258-336 (EDFKEKLPKG…SPRPSQKKSR (79 aa)) is disordered. 2 positions are modified to phosphoserine: S313 and S475. The active-site Proton acceptor is H593. Residues 693–723 (TAFAENRNSETSDTTGTHESDRNKESSDQTG) form a disordered region. The segment covering 708-719 (GTHESDRNKESS) has biased composition (basic and acidic residues). Residue S768 is modified to Phosphoserine.

It belongs to the peptidase C19 family. As to quaternary structure, interacts with FANCD2 and PCNA. Interacts with WDR48. Interacts with ATAD5; the interaction regulates USP1-mediated PCNA deubiquitination. Autocatalytic cleavage of USP1 following UV irradiation inactivates it, leading to an increase in ubiquitinated PCNA, recruitment of POLH and translesion synthesis. Post-translationally, ubiquitinated by the CRL2(KLHDC2) complex following autocatalytic cleavage, leading to its degradation: the CRL2(KLHDC2) complex recognizes the diglycine (Gly-Gly) at the C-terminus.

It is found in the nucleus. It carries out the reaction Thiol-dependent hydrolysis of ester, thioester, amide, peptide and isopeptide bonds formed by the C-terminal Gly of ubiquitin (a 76-residue protein attached to proteins as an intracellular targeting signal).. Functionally, negative regulator of DNA damage repair which specifically deubiquitinates monoubiquitinated FANCD2. Also involved in PCNA-mediated translesion synthesis (TLS) by deubiquitinating monoubiquitinated PCNA. Has almost no deubiquitinating activity by itself and requires the interaction with WDR48 to have a high activity. This Homo sapiens (Human) protein is Ubiquitin carboxyl-terminal hydrolase 1 (USP1).